Here is a 59-residue protein sequence, read N- to C-terminus: Crassipeptide cce9a (59 aa).

A propeptide spanning residues 1 to 30 (ADNHARVAGPRAVASGRYATEKAFLQMMTR) is cleaved from the precursor.

Contains 3 disulfide bonds. In terms of tissue distribution, expressed by the venom duct.

The protein localises to the secreted. Its function is as follows. Crassispirid snail peptide that induces sleep-like symptoms in young mice (12 and 14 days) and hyperactivity in older mice (16 days), when intracranially injected. The protein is Crassipeptide cce9a of Crassispira cerithina (Sea snail).